A 481-amino-acid polypeptide reads, in one-letter code: Rho GTPase-activating protein 15 (481 aa).

S51, S111, S204, S207, and S249 each carry phosphoserine. In terms of domain architecture, PH spans 87–197; it reads MVEKEGYLQK…WFQAIKNAID (111 aa). The 190-residue stretch at 287–476 folds into the Rho-GAP domain; that stretch reads SHLHTVCERE…FMLTEYDKIF (190 aa).

The protein localises to the cytoplasm. The protein resides in the membrane. GTPase activator for the Rho-type GTPases by converting them to an inactive GDP-bound state. Has activity toward RAC1. Overexpression results in an increase in actin stress fibers and cell contraction. This chain is Rho GTPase-activating protein 15 (Arhgap15), found in Mus musculus (Mouse).